Consider the following 132-residue polypeptide: Transcription antitermination protein NusB (132 aa).

Belongs to the NusB family.

In terms of biological role, involved in transcription antitermination. Required for transcription of ribosomal RNA (rRNA) genes. Binds specifically to the boxA antiterminator sequence of the ribosomal RNA (rrn) operons. The chain is Transcription antitermination protein NusB from Campylobacter jejuni subsp. doylei (strain ATCC BAA-1458 / RM4099 / 269.97).